A 236-amino-acid chain; its full sequence is Small ribosomal subunit protein bS21m (236 aa).

The tract at residues 65–136 is disordered; that stretch reads KPAAGAAAGG…SSKPSPMQTW (72 aa). Low complexity predominate over residues 107–131; it reads SNSSTSSSSSSSSSGGALYSSSKPS.

This sequence belongs to the bacterial ribosomal protein bS21 family. In terms of assembly, component of the mitochondrial small ribosomal subunit (mt-SSU). Mature N.crassa 74S mitochondrial ribosomes consist of a small (37S) and a large (54S) subunit. The 37S small subunit contains a 16S ribosomal RNA (16S mt-rRNA) and 32 different proteins. The 54S large subunit contains a 23S rRNA (23S mt-rRNA) and 42 different proteins.

It is found in the mitochondrion. Its function is as follows. Component of the mitochondrial ribosome (mitoribosome), a dedicated translation machinery responsible for the synthesis of mitochondrial genome-encoded proteins, including at least some of the essential transmembrane subunits of the mitochondrial respiratory chain. The mitoribosomes are attached to the mitochondrial inner membrane and translation products are cotranslationally integrated into the membrane. The sequence is that of Small ribosomal subunit protein bS21m (mrp21) from Neurospora crassa (strain ATCC 24698 / 74-OR23-1A / CBS 708.71 / DSM 1257 / FGSC 987).